Consider the following 385-residue polypeptide: Multidrug resistance protein MdtE (385 aa).

The first 20 residues, 1 to 20 (MNRRRKLLIPLLFCGAMLTA), serve as a signal peptide directing secretion. Cysteine 21 is lipidated: N-palmitoyl cysteine. The S-diacylglycerol cysteine moiety is linked to residue cysteine 21.

It belongs to the membrane fusion protein (MFP) (TC 8.A.1) family. As to quaternary structure, homotrimer. Part of the tripartite efflux system MdtEF-TolC, which is composed of an inner membrane transporter, MdtF, a membrane fusion protein, MdtE, and an outer membrane component, TolC. The complex forms a large protein conduit and can translocate molecules across both the inner and outer membranes.

Its subcellular location is the cell inner membrane. In terms of biological role, part of the tripartite efflux system MdtEF-TolC, which confers resistance to compounds such as rhodamine 6G, erythromycin, doxorubicin, ethidium bromide, TPP, SDS, deoxycholate, crystal violet and benzalkonium. The chain is Multidrug resistance protein MdtE (mdtE) from Escherichia coli (strain K12).